The following is a 58-amino-acid chain: 6.4 kDa protein (58 aa).

The chain is 6.4 kDa protein from Pseudomonas phage Pf3 (Bacteriophage Pf3).